A 31-amino-acid polypeptide reads, in one-letter code: Cytochrome b6-f complex subunit 6 (31 aa).

The helical transmembrane segment at 4 to 24 (ITSYFGFLLAALTLTLALFIG) threads the bilayer.

It belongs to the PetL family. As to quaternary structure, the 4 large subunits of the cytochrome b6-f complex are cytochrome b6, subunit IV (17 kDa polypeptide, PetD), cytochrome f and the Rieske protein, while the 4 small subunits are PetG, PetL, PetM and PetN. The complex functions as a dimer.

The protein localises to the plastid. It localises to the chloroplast thylakoid membrane. Functionally, component of the cytochrome b6-f complex, which mediates electron transfer between photosystem II (PSII) and photosystem I (PSI), cyclic electron flow around PSI, and state transitions. PetL is important for photoautotrophic growth as well as for electron transfer efficiency and stability of the cytochrome b6-f complex. The sequence is that of Cytochrome b6-f complex subunit 6 from Oryza sativa subsp. japonica (Rice).